The sequence spans 162 residues: Mediator of RNA polymerase II transcription subunit 31 (162 aa).

The disordered stretch occupies residues 131 to 162 (VQGGQNVEAGDTGHNEGDQGTQQDKENIALKT). The segment covering 141-162 (DTGHNEGDQGTQQDKENIALKT) has biased composition (basic and acidic residues).

This sequence belongs to the Mediator complex subunit 31 family. In terms of assembly, component of the Mediator complex.

It is found in the nucleus. Functionally, component of the Mediator complex, a coactivator involved in the regulated transcription of nearly all RNA polymerase II-dependent genes. Mediator functions as a bridge to convey information from gene-specific regulatory proteins to the basal RNA polymerase II transcription machinery. Mediator is recruited to promoters by direct interactions with regulatory proteins and serves as a scaffold for the assembly of a functional preinitiation complex with RNA polymerase II and the general transcription factors. This is Mediator of RNA polymerase II transcription subunit 31 (soh1) from Aspergillus fumigatus (strain ATCC MYA-4609 / CBS 101355 / FGSC A1100 / Af293) (Neosartorya fumigata).